The primary structure comprises 1164 residues: MAQQANVGELLAMLDSPMLGVRDDVTAVFKENLNSDRGPMLVNTLVDYYLETSSQPALHILTTLQEPHDKHLLDRINEYVGKAATRLSILSLLGHVIRLQPSWKHKLSQAPLLPSLLKCLKMDTDVVVLTTGVLVLITMLPMIPQSGKQHLLDFFDIFGRLSSWCLKKPGHVAEVYLVHLHASVYALFHRLYGMYPCNFVSFLRSHYSMKENLETFEEVVKPMMEHVRIHPELVTGSKDHELDPRRWKRLETHDVVIECAKISLDPTEASYEDGYSVSHQISARFPHRSADVTTSPYADTQNSYGCATSTPYSTSRLMLLNMPGQLPQTLSSPSTRLITEPPQATLWSPSMVCGMTTPPTSPGNVPPDLSHPYSKVFGTTAGGKGTPLGTPATSPPPAPLCHSDDYVHISLPQATVTPPRKEERMDSARPCLHRQHHLLNDRGSEEPPGSKGSVTLSDLPGFLGDLASEEDSIEKDKEEAAISRELSEITTAEAEPVVPRGGFDSPFYRDSLPGSQRKTHSAASSSQGASVNPEPLHSSLDKLGPDTPKQAFTPIDLPCGSADESPAGDRECQTSLETSIFTPSPCKIPPPTRVGFGSGQPPPYDHLFEVALPKTAHHFVIRKTEELLKKAKGNTEEDGVPSTSPMEVLDRLIQQGADAHSKELNKLPLPSKSVDWTHFGGSPPSDEIRTLRDQLLLLHNQLLYERFKRQQHALRNRRLLRKVIKAAALEEHNAAMKDQLKLQEKDIQMWKVSLQKEQARYNQLQEQRDTMVTKLHSQIRQLQHDREEFYNQSQELQTKLEDCRNMIAELRIELKKANNKVCHTELLLSQVSQKLSNSESVQQQMEFLNRQLLVLGEVNELYLEQLQNKHSDTTKEVEMMKAAYRKELEKNRSHVLQQTQRLDTSQKRILELESHLAKKDHLLLEQKKYLEDVKLQARGQLQAAESRYEAQKRITQVFELEILDLYGRLEKDGLLKKLEEEKAEAAEAAEERLDCCNDGCSDSMVGHNEEASGHNGETKTPRPSSARGSSGSRGGGGSSSSSSELSTPEKPPHQRAGPFSSRWETTMGEASASIPTTVGSLPSSKSFLGMKARELFRNKSESQCDEDGMTSSLSESLKTELGKDLGVEAKIPLNLDGPHPSPPTPDSVGQLHIMDYNETHHEHS.

Lys30 participates in a covalent cross-link: Glycyl lysine isopeptide (Lys-Gly) (interchain with G-Cter in ubiquitin). The mediates interaction with WDR45B stretch occupies residues 403–787; sequence SDDYVHISLP…QIRQLQHDRE (385 aa). The interval 439-571 is disordered; it reads LNDRGSEEPP…ADESPAGDRE (133 aa). The span at 474–487 shows a compositional bias: basic and acidic residues; sequence EKDKEEAAISRELS. 5 positions are modified to phosphoserine: Ser487, Ser505, Ser511, Ser521, and Ser598. Positions 513 to 530 are enriched in polar residues; sequence PGSQRKTHSAASSSQGAS. Residues 721 to 997 are a coiled coil; sequence RKVIKAAALE…AAEERLDCCN (277 aa). The interval 1006–1085 is disordered; it reads GHNEEASGHN…TTVGSLPSSK (80 aa). Residues 1007–1020 are compositionally biased toward basic and acidic residues; the sequence is HNEEASGHNGETKT. The span at 1073–1085 shows a compositional bias: polar residues; the sequence is SIPTTVGSLPSSK. Ser1100 bears the Phosphoserine mark. The interval 1131–1164 is disordered; sequence IPLNLDGPHPSPPTPDSVGQLHIMDYNETHHEHS. Residues 1155–1164 are compositionally biased toward basic and acidic residues; it reads DYNETHHEHS.

As to quaternary structure, component of the TSC-TBC complex (also named Rhebulator complex), composed of 2 molecules of TSC1, 2 molecules of TSC2 and 1 molecule of TBC1D7. Probably forms a complex composed of chaperones HSP90 and HSP70, co-chaperones STIP1/HOP, CDC37, PPP5C, PTGES3/p23, TSC1 and client protein TSC2. Forms a complex composed of chaperones HSP90 and HSP70, co-chaperones CDC37, PPP5C, TSC1 and client protein TSC2, CDK4, AKT, RAF1 and NR3C1; this complex does not contain co-chaperones STIP1/HOP and PTGES3/p23. Forms a complex containing HSP90AA1, TSC1 and TSC2; TSC1 is required to recruit TCS2 to the complex. Interacts (via C-terminus) with the closed form of HSP90AA1 (via the middle domain and TPR repeat-binding motif). Interacts with DOCK7. Interacts with FBXW5. Interacts with WDR45B. Interacts with RPAP3 and URI1. Phosphorylation at Ser-505 does not affect interaction with TSC2. In terms of processing, 'Lys-63'-linked ubiquitinated at Lys-30 by PELI1; the ubiquitination promotes TSC1/TSC2 complex stability. Highly expressed in skeletal muscle, followed by heart, brain, placenta, pancreas, lung, liver and kidney. Also expressed in embryonic kidney cells.

Its subcellular location is the lysosome membrane. It localises to the cytoplasm. The protein resides in the cytosol. Non-catalytic component of the TSC-TBC complex, a multiprotein complex that acts as a negative regulator of the canonical mTORC1 complex, an evolutionarily conserved central nutrient sensor that stimulates anabolic reactions and macromolecule biosynthesis to promote cellular biomass generation and growth. The TSC-TBC complex acts as a GTPase-activating protein (GAP) for the small GTPase RHEB, a direct activator of the protein kinase activity of mTORC1. In absence of nutrients, the TSC-TBC complex inhibits mTORC1, thereby preventing phosphorylation of ribosomal protein S6 kinase (RPS6KB1 and RPS6KB2) and EIF4EBP1 (4E-BP1) by the mTORC1 signaling. The TSC-TBC complex is inactivated in response to nutrients, relieving inhibition of mTORC1. Within the TSC-TBC complex, TSC1 stabilizes TSC2 and prevents TSC2 self-aggregation. Acts as a tumor suppressor. Involved in microtubule-mediated protein transport via its ability to regulate mTORC1 signaling. Also acts as a co-chaperone for HSP90AA1 facilitating HSP90AA1 chaperoning of protein clients such as kinases, TSC2 and glucocorticoid receptor NR3C1. Increases ATP binding to HSP90AA1 and inhibits HSP90AA1 ATPase activity. Competes with the activating co-chaperone AHSA1 for binding to HSP90AA1, thereby providing a reciprocal regulatory mechanism for chaperoning of client proteins. Recruits TSC2 to HSP90AA1 and stabilizes TSC2 by preventing the interaction between TSC2 and ubiquitin ligase HERC1. This chain is Hamartin, found in Homo sapiens (Human).